Reading from the N-terminus, the 278-residue chain is DNA repair protein RecO (278 aa).

Polar residues predominate over residues 1 to 12; it reads MGTNDALTSTED. The tract at residues 1–42 is disordered; sequence MGTNDALTSTEDAVTAGANDAPLPAPPEPPRKARRATSRTSD.

The protein belongs to the RecO family.

Its function is as follows. Involved in DNA repair and RecF pathway recombination. The chain is DNA repair protein RecO from Burkholderia lata (strain ATCC 17760 / DSM 23089 / LMG 22485 / NCIMB 9086 / R18194 / 383).